We begin with the raw amino-acid sequence, 988 residues long: Mediator of RNA polymerase II transcription subunit 24 (988 aa).

6 short sequence motifs (LXXLL motif) span residues leucine 128–leucine 132, leucine 341–leucine 345, leucine 445–leucine 449, leucine 555–leucine 559, leucine 786–leucine 790, and leucine 856–leucine 860.

This sequence belongs to the Mediator complex subunit 24 family. Component of the Mediator complex.

The protein localises to the nucleus. Its function is as follows. Component of the Mediator complex, a coactivator involved in the regulated transcription of nearly all RNA polymerase II-dependent genes. Mediator functions as a bridge to convey information from gene-specific regulatory proteins to the basal RNA polymerase II transcription machinery. Mediator is recruited to promoters by direct interactions with regulatory proteins and serves as a scaffold for the assembly of a functional preinitiation complex with RNA polymerase II and the general transcription factors. The protein is Mediator of RNA polymerase II transcription subunit 24 (med24) of Xenopus laevis (African clawed frog).